Here is a 192-residue protein sequence, read N- to C-terminus: Putative molybdenum cofactor guanylyltransferase (192 aa).

GTP contacts are provided by residues Leu8–Gly10, Lys21, Asp67, and Asp101. Asp101 provides a ligand contact to Mg(2+).

Belongs to the MobA family. As to quaternary structure, monomer. Requires Mg(2+) as cofactor.

The protein resides in the cytoplasm. It catalyses the reaction Mo-molybdopterin + GTP + H(+) = Mo-molybdopterin guanine dinucleotide + diphosphate. Transfers a GMP moiety from GTP to Mo-molybdopterin (Mo-MPT) cofactor (Moco or molybdenum cofactor) to form Mo-molybdopterin guanine dinucleotide (Mo-MGD) cofactor. The sequence is that of Putative molybdenum cofactor guanylyltransferase from Neisseria meningitidis serogroup B (strain ATCC BAA-335 / MC58).